The following is a 69-amino-acid chain: Sec-independent protein translocase protein TatA (69 aa).

Residues 1–21 (MGSLSIWHWLIVLAIALLLFG) traverse the membrane as a helical segment. The tract at residues 41 to 69 (KGMNDDEETPPPAQSTTSRTVEHKADESK) is disordered. Positions 60-69 (TVEHKADESK) are enriched in basic and acidic residues.

The protein belongs to the TatA/E family. As to quaternary structure, the Tat system comprises two distinct complexes: a TatABC complex, containing multiple copies of TatA, TatB and TatC subunits, and a separate TatA complex, containing only TatA subunits. Substrates initially bind to the TatABC complex, which probably triggers association of the separate TatA complex to form the active translocon.

The protein resides in the cell inner membrane. Its function is as follows. Part of the twin-arginine translocation (Tat) system that transports large folded proteins containing a characteristic twin-arginine motif in their signal peptide across membranes. TatA could form the protein-conducting channel of the Tat system. The protein is Sec-independent protein translocase protein TatA of Rhizobium rhizogenes (strain K84 / ATCC BAA-868) (Agrobacterium radiobacter).